The sequence spans 409 residues: tRNA (guanine-N(7)-)-methyltransferase non-catalytic subunit wuho (409 aa).

Residues 48–72 (DADSDSDEESTQQPQKPPTNGNGTA) are disordered. Positions 58–72 (TQQPQKPPTNGNGTA) are enriched in polar residues. WD repeat units lie at residues 72 to 111 (ADNV…DETN), 122 to 161 (MVSR…CKKP), 167 to 206 (GHMS…SIET), and 210 to 252 (GHGE…EVAR).

The protein belongs to the WD repeat TRM82 family. Forms a heterodimer with the catalytic subunit.

The protein localises to the nucleus. It functions in the pathway tRNA modification; N(7)-methylguanine-tRNA biosynthesis. Its function is as follows. Required for the formation of N(7)-methylguanine at position 46 (m7G46) in tRNA. In the complex, it is required to stabilize and induce conformational changes of the catalytic subunit. In Aedes aegypti (Yellowfever mosquito), this protein is tRNA (guanine-N(7)-)-methyltransferase non-catalytic subunit wuho.